The primary structure comprises 149 residues: uncharacterized protein (149 aa).

Serine 21 is modified (phosphoserine). Helical transmembrane passes span phenylalanine 48–glycine 68 and valine 72–valine 92. Residues alanine 116–lysine 149 are disordered. A compositionally biased stretch (acidic residues) spans leucine 127 to glutamate 142.

It is found in the membrane. This is an uncharacterized protein from Schizosaccharomyces pombe (strain 972 / ATCC 24843) (Fission yeast).